We begin with the raw amino-acid sequence, 115 residues long: Photosystem II reaction center Psb28 protein (115 aa).

Belongs to the Psb28 family. As to quaternary structure, part of the photosystem II complex.

The protein resides in the plastid. Its subcellular location is the chloroplast thylakoid membrane. The sequence is that of Photosystem II reaction center Psb28 protein from Pyropia yezoensis (Susabi-nori).